The following is a 361-amino-acid chain: S-adenosylmethionine-dependent nucleotide dehydratase RSAD2 (361 aa).

Positions 69–289 (PTTPTSVNYH…LERHKEVSCL (221 aa)) constitute a Radical SAM core domain. [4Fe-4S] cluster is bound by residues C83, C87, and C90. At K197 the chain carries N6-acetyllysine. K206 is covalently cross-linked (Glycyl lysine isopeptide (Lys-Gly) (interchain with G-Cter in ubiquitin)).

It belongs to the radical SAM superfamily. RSAD2 family. Homodimer. Interacts with IRAK1 and TRAF6. Interacts with FPPS. Interacts with HADHB. Interacts (via C-terminus) with VAPA/VAP33 (via C-terminus). As to quaternary structure, (Microbial infection) Interacts with human cytomegalovirus/HHV-5 protein vMIA/UL37; this interaction results in RSAD2/viperin relocalization from the endoplasmic reticulum to the mitochondria. In terms of assembly, (Microbial infection) Interacts (via N-terminus) with enterovirus A71 protein 2C; this interaction inhibits viral replication. (Microbial infection) Interacts with herpes simplex virus 1/HHV-1 glycoprotein D; this interaction inhibits HHV-1 replication by facilitating IRF7-mediated IFN-beta production. The cofactor is [4Fe-4S] cluster. Post-translationally, acetylated by HAT1. HAT1-mediated acetylation of Lys-197 in turn recruits UBE4A that stimulates RSAD2 polyubiquitination leading to proteasomal degradation. In terms of processing, 'Lys-6'-linked polyubiquitination at Lys-206 leads to RSAD2 protein degradation.

It is found in the endoplasmic reticulum membrane. The protein localises to the golgi apparatus. Its subcellular location is the endoplasmic reticulum. It localises to the lipid droplet. The protein resides in the mitochondrion. It is found in the mitochondrion inner membrane. The protein localises to the mitochondrion outer membrane. It catalyses the reaction CTP + AH2 + S-adenosyl-L-methionine = 3'-deoxy-3',4'-didehydro-CTP + 5'-deoxyadenosine + L-methionine + A + H2O + H(+). Its activity is regulated as follows. IRAK1 and TRAF6 synergistically activate RSAD2 increasing its activity with CTP as substrate about 10-fold. Its function is as follows. Interferon-inducible antiviral protein which plays a major role in the cell antiviral state induced by type I and type II interferon. Catalyzes the conversion of cytidine triphosphate (CTP) to 3'-deoxy-3',4'-didehydro-CTP (ddhCTP) via a SAM-dependent radical mechanism. In turn, ddhCTP acts as a chain terminator for the RNA-dependent RNA polymerases from multiple viruses and directly inhibits viral replication. Therefore, inhibits a wide range of DNA and RNA viruses, including human cytomegalovirus (HCMV), hepatitis C virus (HCV), west Nile virus (WNV), dengue virus, sindbis virus, influenza A virus, sendai virus, vesicular stomatitis virus (VSV), zika virus, and human immunodeficiency virus (HIV-1). Also promotes TLR7 and TLR9-dependent production of IFN-beta production in plasmacytoid dendritic cells (pDCs) by facilitating 'Lys-63'-linked ubiquitination of IRAK1 by TRAF6. Plays a role in CD4+ T-cells activation and differentiation. Facilitates T-cell receptor (TCR)-mediated GATA3 activation and optimal T-helper 2 (Th2) cytokine production by modulating NFKB1 and JUNB activities. Can inhibit secretion of soluble proteins. The polypeptide is S-adenosylmethionine-dependent nucleotide dehydratase RSAD2 (Homo sapiens (Human)).